A 713-amino-acid chain; its full sequence is tRNA 5-methylaminomethyl-2-thiouridine biosynthesis bifunctional protein MnmC (713 aa).

Residues 1–300 (MTAEPNKPCQ…MAAILSSATP (300 aa)) form a tRNA (mnm(5)s(2)U34)-methyltransferase region. The segment at 306–713 (IGGGLASAHL…LRKLLKGKAL (408 aa)) is FAD-dependent cmnm(5)s(2)U34 oxidoreductase.

The protein in the N-terminal section; belongs to the methyltransferase superfamily. tRNA (mnm(5)s(2)U34)-methyltransferase family. In the C-terminal section; belongs to the DAO family. The cofactor is FAD.

Its subcellular location is the cytoplasm. It catalyses the reaction 5-aminomethyl-2-thiouridine(34) in tRNA + S-adenosyl-L-methionine = 5-methylaminomethyl-2-thiouridine(34) in tRNA + S-adenosyl-L-homocysteine + H(+). Functionally, catalyzes the last two steps in the biosynthesis of 5-methylaminomethyl-2-thiouridine (mnm(5)s(2)U) at the wobble position (U34) in tRNA. Catalyzes the FAD-dependent demodification of cmnm(5)s(2)U34 to nm(5)s(2)U34, followed by the transfer of a methyl group from S-adenosyl-L-methionine to nm(5)s(2)U34, to form mnm(5)s(2)U34. This Shewanella baltica (strain OS155 / ATCC BAA-1091) protein is tRNA 5-methylaminomethyl-2-thiouridine biosynthesis bifunctional protein MnmC.